The following is a 149-amino-acid chain: MGIHQCTAVVLLLLCASLSTYGQPAEIRRRYEHFLTQHVYGGITEQTCDRVMRQRRITRFPTGNDCKEVNTFIQANGNHVRTVCTGGGTRQTDNRDLYMSNNQFTVITCTLRSGERHPNCRYRGKESSRKIVVACEGEWPTHYEKGVIV.

The N-terminal stretch at 1–22 is a signal peptide; that stretch reads MGIHQCTAVVLLLLCASLSTYG. A Pyrrolidone carboxylic acid modification is found at glutamine 23. The active-site Proton acceptor is histidine 38. Disulfide bonds link cysteine 48/cysteine 109, cysteine 66/cysteine 120, and cysteine 84/cysteine 135. 67-71 lines the substrate pocket; the sequence is KEVNT. Histidine 142 (proton donor) is an active-site residue.

This sequence belongs to the pancreatic ribonuclease family. In terms of processing, cleavage between Arg-55 and Arg-56 is catalyzed by a membrane-localized Gram-negative bacterium protease (OmpT in E.coli). The excised fragment is then transported to the bacterium cytosol for cleavage of the disulfide bridge linking Cys-48 and Cys-109, thus separating the N-terminal and LF-ZF3. LF-ZF3 but not the N-terminal peptide possesses bactericidal activity. In terms of tissue distribution, strongly expressed in the adult liver and gut, and weakly in the heart and testis.

Its subcellular location is the secreted. Functionally, ribonuclease. Angiogenic. Plays a role in host defense. Exhibits strong antibacterial activity against Gram-negative bacteria but mild antibacterial activity against Gram-positive bacteria. The RNase activity is not required for the bactericidal activity. In Danio rerio (Zebrafish), this protein is Ribonuclease-like 3.